The sequence spans 479 residues: Catalase A (479 aa).

A compositionally biased stretch (polar residues) spans Met-1–Ser-21. Residues Met-1–Arg-25 are disordered. Catalysis depends on residues His-53 and Asn-126. Tyr-336 contacts heme. The tract at residues Gln-350–Ser-376 is disordered. The segment covering Asn-361–Ser-376 has biased composition (polar residues).

It belongs to the catalase family. The cofactor is heme.

It carries out the reaction 2 H2O2 = O2 + 2 H2O. With respect to regulation, activated by peroxide. Functionally, the major expressed catalase protein in strain Corvallis in stationary phase. Decomposes hydrogen peroxide into water and oxygen; serves to protect cells from the toxic effects of hydrogen peroxide. The chain is Catalase A (katA) from Pseudomonas putida (Arthrobacter siderocapsulatus).